A 454-amino-acid polypeptide reads, in one-letter code: MGRTETGDESSARKMRRKVPTSIESLDADILCIIFSFLDLFDLVHCTVVCNSWNAVIKRLKLLQASCRKMHHLGSDSPSSSTSLDRPAEIDVEDFAMKHHKMALLRGRIEIERWEAHSHRVSQCRMKKGLLLTGVGDKVMRLWSLKSYKCMEEYSLPDASSLIDFDFDESKKLEVVSLAWEYFDSVVVVVVEIVGLVGTRISIWRRNGQRSIFPSRAGTFPKGLCMRYIDPEAVVGCEDGTARVFDMYSKTCSQIIRTQGGPITCLSLSDNQLFLSGSSLGRVTVSDPLMDQPVATLKSTITAGGIQTICFNQGTNLAFIGTTGGYVSCWDLRKMDRLWEKRVSPNVVYSIQQLRNDTSVMVAGGIDGVLRMIDQKSGRVLSRVIMDDKFSTTSTRNNQVVIEKRRGKRVSQDMEIDKIERKVRPQISCIAMGMKKMVTAHNGKCISVWKFNLS.

Residues 20 to 66 (PTSIESLDADILCIIFSFLDLFDLVHCTVVCNSWNAVIKRLKLLQAS) enclose the F-box domain. WD repeat units lie at residues 85-116 (DRPA…RWEA), 117-153 (HSHR…CMEE), 170-214 (SKKL…SIFP), 215-255 (SRAG…CSQI), 258-296 (TQGG…PVAT), 301-340 (ITAG…RLWE), 343-383 (VSPN…VLSR), and 422-454 (KVRP…FNLS).

The protein is F-box/WD-40 repeat-containing protein At3g52030 of Arabidopsis thaliana (Mouse-ear cress).